The sequence spans 268 residues: CCAAT/enhancer-binding protein delta (268 aa).

3 disordered regions span residues methionine 1–threonine 48, glycine 97–glycine 132, and alanine 152–methionine 219. Serine 2 carries the N-acetylserine modification. A Glycyl lysine isopeptide (Lys-Gly) (interchain with G-Cter in SUMO) cross-link involves residue lysine 120. The span at proline 155–serine 167 shows a compositional bias: pro residues. Residues valine 177 to asparagine 201 are compositionally biased toward basic and acidic residues. The region spanning serine 191–leucine 254 is the bZIP domain. The tract at residues arginine 195 to lysine 222 is basic motif. Positions leucine 226 to leucine 254 are leucine-zipper.

It belongs to the bZIP family. C/EBP subfamily. In terms of assembly, binds DNA as a homodimer and as a heterodimer. Can form stable heterodimers with CEBPA, CEBPB and CEBPE. Directly interacts with SPI1/PU.1; this interaction does not affect DNA-binding properties of each partner. Interacts with PRDM16.

Its subcellular location is the nucleus. Transcription activator that recognizes two different DNA motifs: the CCAAT homology common to many promoters and the enhanced core homology common to many enhancers. Important transcription factor regulating the expression of genes involved in immune and inflammatory responses. Transcriptional activator that enhances IL6 transcription alone and as heterodimer with CEBPB. The protein is CCAAT/enhancer-binding protein delta (Cebpd) of Mus musculus (Mouse).